A 190-amino-acid polypeptide reads, in one-letter code: Guanylate kinase (190 aa).

The Guanylate kinase-like domain occupies 8–188 (GRLVILAGPS…AVKAIEDVLL (181 aa)). 15-22 (GPSAVGKS) lines the ATP pocket.

The protein belongs to the guanylate kinase family.

It is found in the cytoplasm. It catalyses the reaction GMP + ATP = GDP + ADP. Essential for recycling GMP and indirectly, cGMP. The protein is Guanylate kinase of Corynebacterium glutamicum (strain ATCC 13032 / DSM 20300 / JCM 1318 / BCRC 11384 / CCUG 27702 / LMG 3730 / NBRC 12168 / NCIMB 10025 / NRRL B-2784 / 534).